A 111-amino-acid chain; its full sequence is Resistin-like gamma (111 aa).

The signal sequence occupies residues 1 to 23 (MKTAICSLLICIFLLQLMVPVNT). 5 disulfide bridges follow: Cys55–Cys108, Cys67–Cys107, Cys76–Cys93, Cys78–Cys95, and Cys82–Cys97.

The protein belongs to the resistin/FIZZ family. In terms of assembly, homodimer. Heterodimer with RETNLB. As to expression, highly expressed in bone marrow, spleen and white blood cells. Also detected at low levels in thymus, lung, trachea, white adipose tissue, nasal respiratory epithelium, colon, small intestine, kidney, liver, and heart.

The protein localises to the secreted. Probable hormone. Promotes chemotaxis in myeloid cells. This chain is Resistin-like gamma, found in Rattus norvegicus (Rat).